The following is a 223-amino-acid chain: MTPTRAQLAAFVDHTLLKPEATAADVAALVTEAAELGVYAVCVSPTMVPAAVQAGAGVRVASVAGFPSGKHVSAVKAHEAALAVASGAAEIDMVIDVGAALAGDLDGVRADIAAVRDAVGGAVLKVIVESSALLALADEHTLVRVCRAAEDAGADFVKTSTGFHPTGGASVRAVALMAEAVGGRLGVKASGGIRTAADALAMLDAGATRLGLSGTRAVLDGLG.

D92 functions as the Proton donor/acceptor in the catalytic mechanism. K158 acts as the Schiff-base intermediate with acetaldehyde in catalysis. K188 functions as the Proton donor/acceptor in the catalytic mechanism.

This sequence belongs to the DeoC/FbaB aldolase family. DeoC type 1 subfamily.

The protein resides in the cytoplasm. The catalysed reaction is 2-deoxy-D-ribose 5-phosphate = D-glyceraldehyde 3-phosphate + acetaldehyde. Its pathway is carbohydrate degradation; 2-deoxy-D-ribose 1-phosphate degradation; D-glyceraldehyde 3-phosphate and acetaldehyde from 2-deoxy-alpha-D-ribose 1-phosphate: step 2/2. In terms of biological role, catalyzes a reversible aldol reaction between acetaldehyde and D-glyceraldehyde 3-phosphate to generate 2-deoxy-D-ribose 5-phosphate. The sequence is that of Deoxyribose-phosphate aldolase from Mycolicibacterium paratuberculosis (strain ATCC BAA-968 / K-10) (Mycobacterium paratuberculosis).